The chain runs to 149 residues: MAHCLAAVSSFSPSAVRRRLSSQVANVVSSRSSVSFHSRQMSFVSISSRPSSLRFKICCAAMGEAQAKKETVDKVCMIVKKQLAVPDGTPVTAESKFSELGADSLDTVEIVMGLEEEFNITVDETSAQDIATVQDAANLIEKLVTEKTA.

The transit peptide at 1–59 directs the protein to the chloroplast; the sequence is MAHCLAAVSSFSPSAVRRRLSSQVANVVSSRSSVSFHSRQMSFVSISSRPSSLRFKICC. One can recognise a Carrier domain in the interval 69 to 144; sequence KETVDKVCMI…DAANLIEKLV (76 aa). The residue at position 104 (Ser-104) is an O-(pantetheine 4'-phosphoryl)serine.

This sequence belongs to the acyl carrier protein (ACP) family. 4'-phosphopantetheine is transferred from CoA to a specific serine of apo-ACP by acpS. This modification is essential for activity because fatty acids are bound in thioester linkage to the sulfhydryl of the prosthetic group.

It is found in the plastid. The protein localises to the chloroplast. Its pathway is lipid metabolism; fatty acid biosynthesis. Carrier of the growing fatty acid chain in fatty acid biosynthesis. This Hordeum vulgare (Barley) protein is Acyl carrier protein 1, chloroplastic (ACL1.1).